The primary structure comprises 301 residues: Cell division control protein 2 homolog 1 (301 aa).

In terms of domain architecture, Protein kinase spans 5-297 (YQRLEKIGEG…AAQALEHPYF (293 aa)). ATP is bound by residues 11–19 (IGEGSYGVV) and Lys34. Position 15 is a phosphoserine (Ser15). Residue Tyr16 is modified to Phosphotyrosine. The Proton acceptor role is filled by Asp127. Thr160 is modified (phosphothreonine; by CAK).

This sequence belongs to the protein kinase superfamily. CMGC Ser/Thr protein kinase family. CDC2/CDKX subfamily. As to quaternary structure, forms a stable but non-covalent complex with a regulatory subunit and with a cyclin.

The catalysed reaction is L-seryl-[protein] + ATP = O-phospho-L-seryl-[protein] + ADP + H(+). It catalyses the reaction L-threonyl-[protein] + ATP = O-phospho-L-threonyl-[protein] + ADP + H(+). Its activity is regulated as follows. Phosphorylation at Ser-15 or Tyr-16 inactivates the enzyme, while phosphorylation at Thr-160 activates it. Functionally, probably involved in the control of the cell cycle. This Trypanosoma congolense protein is Cell division control protein 2 homolog 1 (CRK1).